We begin with the raw amino-acid sequence, 92 residues long: Small ribosomal subunit protein uS19c (92 aa).

This sequence belongs to the universal ribosomal protein uS19 family.

The protein resides in the plastid. It is found in the chloroplast. Its function is as follows. Protein S19 forms a complex with S13 that binds strongly to the 16S ribosomal RNA. In Platanus occidentalis (Sycamore), this protein is Small ribosomal subunit protein uS19c.